The chain runs to 63 residues: Conotoxin PnMRCL-0111 (63 aa).

The signal sequence occupies residues 1–22 (MHCLSVFVILLLLTASAPSVDA). Positions 23 to 50 (QPKTEDDVPLSSFHDDLQRTVRTLLDIR) are excised as a propeptide. At Trp-62 the chain carries Tryptophan amide.

This sequence belongs to the conotoxin T superfamily. Post-translationally, contains 2 disulfide bonds that can be either 'C1-C3, C2-C4' or 'C1-C4, C2-C3', since these disulfide connectivities have been observed for conotoxins with cysteine framework V (for examples, see AC P0DQQ7 and AC P81755). In terms of tissue distribution, expressed by the venom duct.

The protein localises to the secreted. This Conus pennaceus (Feathered cone) protein is Conotoxin PnMRCL-0111.